The primary structure comprises 331 residues: MTENTHETAPNTADTDTADFDTADTDRADGAADVSTNTPNETGEAAIPELVIISGMSGAGRSTAAKCLEDLGWFVVDNLPPALIPTMVELGARSQGNVARIAVVVDVRGRRFFDNLRESLADLEAKHVTRRIVFLESSDDALVRRFESVRRPHPLQGDGRIVDGIAAERDLLRELRGDADLVIDTSSLNVHELRAKMDAQFAGESEPELRATVMSFGYKYGLPVDADLVVDCRFLPNPHWVPELRPFTGVNEEVSDYVFDQPGAKEFLNQYTELLQLIAAGYRREGKRYVTIAVGCTGGKHRSVAMSEKLSARLAAEGIETVLVHRDMGRE.

Positions 1 to 43 (MTENTHETAPNTADTDTADFDTADTDRADGAADVSTNTPNETG) are disordered. 55–62 (GMSGAGRS) is an ATP binding site. Residue 106–109 (DVRG) coordinates GTP.

It belongs to the RapZ-like family.

Functionally, displays ATPase and GTPase activities. The sequence is that of Nucleotide-binding protein SGR_5570 from Streptomyces griseus subsp. griseus (strain JCM 4626 / CBS 651.72 / NBRC 13350 / KCC S-0626 / ISP 5235).